The following is a 341-amino-acid chain: Methionine import ATP-binding protein MetN 2 (341 aa).

The ABC transporter domain maps to 2–241 (INLQNVSKIY…PKEEMTKRFV (240 aa)). Position 38 to 45 (38 to 45 (GYSGAGKS)) interacts with ATP.

It belongs to the ABC transporter superfamily. Methionine importer (TC 3.A.1.24) family. In terms of assembly, the complex is composed of two ATP-binding proteins (MetN), two transmembrane proteins (MetI) and a solute-binding protein (MetQ).

It localises to the cell membrane. The enzyme catalyses L-methionine(out) + ATP + H2O = L-methionine(in) + ADP + phosphate + H(+). It carries out the reaction D-methionine(out) + ATP + H2O = D-methionine(in) + ADP + phosphate + H(+). Part of the ABC transporter complex MetNIQ involved in methionine import. Responsible for energy coupling to the transport system. The protein is Methionine import ATP-binding protein MetN 2 of Bacillus licheniformis (strain ATCC 14580 / DSM 13 / JCM 2505 / CCUG 7422 / NBRC 12200 / NCIMB 9375 / NCTC 10341 / NRRL NRS-1264 / Gibson 46).